A 177-amino-acid chain; its full sequence is Ribosome maturation factor RimM (177 aa).

Residues 101–174 (EGEFHLLDLV…WLLLTPPPGL (74 aa)) enclose the PRC barrel domain.

The protein belongs to the RimM family. In terms of assembly, binds ribosomal protein uS19.

Its subcellular location is the cytoplasm. Its function is as follows. An accessory protein needed during the final step in the assembly of 30S ribosomal subunit, possibly for assembly of the head region. Essential for efficient processing of 16S rRNA. May be needed both before and after RbfA during the maturation of 16S rRNA. It has affinity for free ribosomal 30S subunits but not for 70S ribosomes. This chain is Ribosome maturation factor RimM, found in Synechococcus sp. (strain CC9605).